A 600-amino-acid polypeptide reads, in one-letter code: 69 kDa paraflagellar rod protein (600 aa).

The segment at 335–355 is calmodulin-binding; sequence DKQDEAWRRIQELERVLQRLG.

Heterodimer of a 69 kDa and a 73 kDa protein.

Its subcellular location is the cell projection. It localises to the cilium. The protein resides in the flagellum. The protein localises to the cytoplasm. It is found in the cytoskeleton. In terms of biological role, major component of the paraflagellar rod (PFR). The PFR is a highly ordered lattices of fibrous proteins that are located inside the flagellum and assume a fixed orientation with respect to the microtubular axoneme. In Trypanosoma brucei brucei, this protein is 69 kDa paraflagellar rod protein (PFRA).